A 542-amino-acid polypeptide reads, in one-letter code: MTVMEHTKAASIDLTKHGLRNVKEVVRNPSYEMLFAEETRADLEGYEKGVVTELGAVAVDTGIFTGRSPKDKYIVKDATTEEHMWWTTPAVPNDNKPITQEVWNDLKQLVTNQLSGKRVFVIDGYCGANPDTRLSIRVITEVAWQAHFVKNMFIRPTEEELASFEPDFVVMNGAKCTNQKWKEHGLNSENFTVFNLTERMQLIGGTWYGGEMKKGMFAMMNYFLPLKGIASMHCSANMGKEGDVAIFFGLSGTGKTTLSTDPKRALIGDDEHGWDDDGVFNFEGGCYAKTIKLSKEAEPDIYNAIRRDALLENVTVRNDGSINFDDGSKTENTRVSYPIHHIENIVKPVSKGGHANKVIFLSADAFGVLPPVSKLTPEQTKYHFLSGFTAKLAGTERGITEPTPTFSACFGAAFLTLHPTKYAEVLVKRMEEAGAEAYLVNTGWNGSGKRISIQDTRGIIDAILDGSIEEAPTKHVPIFNLEVPTSLPGVDPTILDPRDTYVDPLQWESKAQDLAQRFINNFAKYTDNAEGQSLVAAGPQLD.

Substrate contacts are provided by Arg67, Tyr208, and Lys214. ATP-binding positions include Lys214, His233, and 249-257; that span reads GLSGTGKTT. The Mn(2+) site is built by Lys214 and His233. Asp270 serves as a coordination point for Mn(2+). Residues Glu298, Arg334, 450–451, and Thr456 each bind ATP; that span reads RI. Arg334 lines the substrate pocket.

It belongs to the phosphoenolpyruvate carboxykinase (ATP) family. As to quaternary structure, monomer. Requires Mn(2+) as cofactor.

It is found in the cytoplasm. It carries out the reaction oxaloacetate + ATP = phosphoenolpyruvate + ADP + CO2. It participates in carbohydrate biosynthesis; gluconeogenesis. In terms of biological role, involved in the gluconeogenesis. Catalyzes the conversion of oxaloacetate (OAA) to phosphoenolpyruvate (PEP) through direct phosphoryl transfer between the nucleoside triphosphate and OAA. This Vibrio vulnificus (strain CMCP6) protein is Phosphoenolpyruvate carboxykinase (ATP).